We begin with the raw amino-acid sequence, 45 residues long: C-phycocyanin beta subunit (45 aa).

It belongs to the phycobiliprotein family. In terms of assembly, heterodimer of an alpha and a beta subunit. The hererodimer further assembles into trimers and the trimers into hexamers. Contains two covalently linked bilin chromophores.

The protein resides in the cellular thylakoid membrane. Its function is as follows. Light-harvesting photosynthetic bile pigment-protein from the phycobiliprotein complex (phycobilisome, PBS). Phycocyanin is the major phycobiliprotein in the PBS rod. The polypeptide is C-phycocyanin beta subunit (cpcB) (Limnospira fusiformis (Arthrospira fusiformis)).